The sequence spans 290 residues: Small ribosomal subunit biogenesis GTPase RsgA (290 aa).

The CP-type G domain maps to 62-213 (KNSLVRPPIV…IADTPGFSSL (152 aa)). Residues 111-114 (SKLD) and 156-164 (GQTGVGKST) contribute to the GTP site. Zn(2+)-binding residues include cysteine 237, cysteine 242, histidine 244, and cysteine 250.

The protein belongs to the TRAFAC class YlqF/YawG GTPase family. RsgA subfamily. Monomer. Associates with 30S ribosomal subunit, binds 16S rRNA. Requires Zn(2+) as cofactor.

It localises to the cytoplasm. Functionally, one of several proteins that assist in the late maturation steps of the functional core of the 30S ribosomal subunit. Helps release RbfA from mature subunits. May play a role in the assembly of ribosomal proteins into the subunit. Circularly permuted GTPase that catalyzes slow GTP hydrolysis, GTPase activity is stimulated by the 30S ribosomal subunit. This chain is Small ribosomal subunit biogenesis GTPase RsgA, found in Streptococcus agalactiae serotype III (strain NEM316).